We begin with the raw amino-acid sequence, 573 residues long: Probable catabolite repression protein creC (573 aa).

4 WD repeats span residues 225–265, 305–346, 347–386, and 389–433; these read VSNS…ALFT, LANQ…DIFR, SYYGGLICVCWSPDGKYIVTGGQDDLLTIWSLPERKIVAR, and GHNS…LHRP. 2 disordered regions span residues 448 to 481 and 537 to 573; these read TSNTQYGNRHRADSASNRMRSDSQKTANTYESCD and EGISDKYNDQSSSPAISASATGSGSVSGLADSNTGLS. Over residues 461–479 the composition is skewed to polar residues; sequence SASNRMRSDSQKTANTYES. The stretch at 505–542 is one WD 5 repeat; it reads VGSDPICWLGFQEDCIMTSSLEGHIRTWDRPREGISDK. A compositionally biased stretch (low complexity) spans 547-564; the sequence is SSSPAISASATGSGSVSG.

The protein belongs to the WD repeat creC family. In terms of assembly, interacts with creB.

Functionally, component of the regulatory network controlling carbon source utilization through ubiquitination and deubiquitination involving creA, creB, creC, creD and acrB. Required to prevent the proteolysis of the CreB deubiquitinating enzyme in the absence of carbon catabolite repression. CreB deubiquitinating enzyme stabilized in a complex with the CreC leads to the expression of genes such as those in the proline and quinate pathways. The protein is Probable catabolite repression protein creC (creC) of Aspergillus clavatus (strain ATCC 1007 / CBS 513.65 / DSM 816 / NCTC 3887 / NRRL 1 / QM 1276 / 107).